Reading from the N-terminus, the 414-residue chain is Esterase FrsA (414 aa).

The protein belongs to the FrsA family.

The enzyme catalyses a carboxylic ester + H2O = an alcohol + a carboxylate + H(+). Functionally, catalyzes the hydrolysis of esters. The polypeptide is Esterase FrsA (Escherichia coli O127:H6 (strain E2348/69 / EPEC)).